A 597-amino-acid chain; its full sequence is NADH-quinone oxidoreductase subunits H/I (597 aa).

Residues 1 to 405 (MPDLSLFGHD…FPTPPVPADA (405 aa)) form an NADH-quinone oxidoreductase subunit H region. Transmembrane regions (helical) follow at residues 12–32 (FWLV…IPLV), 82–102 (PIYL…FAVI), 124–144 (VGVL…VLAG), 170–190 (MALC…SGIV), 195–215 (PTWF…SMVG), 260–280 (ALAT…NLIP), 286–306 (WWGL…FVWL), 318–338 (FMRL…MLVA), and 351–371 (ATGA…GLFL). Positions 406-597 (HRVDNPKGGL…APAGAKGGAR (192 aa)) are NADH-quinone oxidoreductase subunit I. 4Fe-4S ferredoxin-type domains are found at residues 455 to 485 (LNRH…VEGA) and 501 to 530 (RVYQ…MTND). [4Fe-4S] cluster-binding residues include Cys465, Cys468, Cys471, Cys475, Cys510, Cys513, Cys516, and Cys520.

The protein in the N-terminal section; belongs to the complex I subunit 1 family. In the C-terminal section; belongs to the complex I 23 kDa subunit family. NDH-1 is composed of 13 different subunits. Subunits NuoA, H/I, J, K, L, M, N constitute the membrane sector of the complex. [4Fe-4S] cluster serves as cofactor.

The protein localises to the cell membrane. It carries out the reaction a quinone + NADH + 5 H(+)(in) = a quinol + NAD(+) + 4 H(+)(out). Its function is as follows. NDH-1 shuttles electrons from NADH, via FMN and iron-sulfur (Fe-S) centers, to quinones in the respiratory chain. The immediate electron acceptor for the enzyme in this species is believed to be ubiquinone. Couples the redox reaction to proton translocation (for every two electrons transferred, four hydrogen ions are translocated across the cytoplasmic membrane), and thus conserves the redox energy in a proton gradient. This subunit may bind ubiquinone. In Nocardia farcinica (strain IFM 10152), this protein is NADH-quinone oxidoreductase subunits H/I (nuoH/I).